Consider the following 151-residue polypeptide: MKTKTCKNLISNEQIQEVQEVYDTFKCRNGEMDKINIQYGFRALGVRLGEEEVEKIFKNQQYINFNSFLDIVTPLIYKIDVYASFEQAFSLFDRDGSGYITFDDLKTVAINLGEARSDSKLYNMIKRADLNGDKKISKIEFIQLLYWKKIY.

EF-hand domains are found at residues 80 to 115 (DVYA…LGEA) and 116 to 151 (RSDS…KKIY). Ca(2+)-binding residues include Asp-93, Asp-95, Ser-97, Tyr-99, Asp-104, Asp-129, Asn-131, Asp-133, Lys-135, and Glu-140.

It belongs to the centrin family.

Its subcellular location is the cytoplasm. It is found in the cytoskeleton. It localises to the microtubule organizing center. The protein localises to the centrosome. The protein resides in the nucleus. Its function is as follows. Plays a fundamental role in microtubule-organizing center structure and function. The polypeptide is Centrin-A (cenA) (Dictyostelium discoideum (Social amoeba)).